A 563-amino-acid polypeptide reads, in one-letter code: MSKIIRSSDESRGALENGVNSLADAVKVTIGPKGRNVVLEKKFGAPDIVNDGVTIARDIELENPFENLGAKLIEQVASKTKDKAGDGTTTATVLAQVMVHEGLKNTAAGASPIEIRRGMEKAVSHIVDKLQQQSKKISGDKVLQVATVSSGGDEEIGAMVAEAMDKVSVDGVITVEESKSLNTELEITEGMAFDRGYSSPYFVTDAERQICEFENPLLLITDRKISSIADLVPVLETVQKSSSPLVILAEEVDGEALATLVVNKNRGVLQVASVRAPSFGERRKAALADIAVLTKGTLISEDKAMTLDKVSLADLGKARKITITKESTTIVANDDTKKEVASRVASIKRELDQTDSDYDKEKLNERIAKLAGGVAVIKVGAPTETELKNRKLRIEDALNATRAAVEEGIVAGGGSTLIKLGEELDSLSKSLDGDQATGVDIIKKALSAPAKQIALNAGENGDVVVSEIQRLGKGFNAATGQYEDLISAGIIDAVKVIRLALQDAVSIASLLITTEVIIADKPEPPSPAGGEGGGDPMGGMGGMGGMGGMGMPGMGGMGMPGMM.

ATP is bound by residues 29–32 (TIGP), 86–90 (DGTTT), G413, 476–478 (NAA), and D492. Residues 520–545 (DKPEPPSPAGGEGGGDPMGGMGGMGG) form a disordered region. The span at 529–545 (GGEGGGDPMGGMGGMGG) shows a compositional bias: gly residues.

This sequence belongs to the chaperonin (HSP60) family. In terms of assembly, forms a cylinder of 14 subunits composed of two heptameric rings stacked back-to-back. Interacts with the co-chaperonin GroES.

The protein localises to the cytoplasm. It catalyses the reaction ATP + H2O + a folded polypeptide = ADP + phosphate + an unfolded polypeptide.. Together with its co-chaperonin GroES, plays an essential role in assisting protein folding. The GroEL-GroES system forms a nano-cage that allows encapsulation of the non-native substrate proteins and provides a physical environment optimized to promote and accelerate protein folding. In Prochlorococcus marinus (strain SARG / CCMP1375 / SS120), this protein is Chaperonin GroEL 1.